The sequence spans 128 residues: Small ribosomal subunit protein eS8 (128 aa).

It belongs to the eukaryotic ribosomal protein eS8 family. Part of the 30S ribosomal subunit.

The chain is Small ribosomal subunit protein eS8 from Methanococcus maripaludis (strain C5 / ATCC BAA-1333).